We begin with the raw amino-acid sequence, 353 residues long: Small ribosomal subunit biogenesis GTPase RsgA (353 aa).

Residues 1–17 (MSKNKLSKGQQRRVNAN) show a composition bias toward polar residues. The tract at residues 1–25 (MSKNKLSKGQQRRVNANHQRRLKTT) is disordered. The CP-type G domain maps to 104–274 (ASVLTRPDFY…VIDSPGVREF (171 aa)). GTP-binding positions include 160–163 (NKID) and 214–222 (GQSGVGKSS). Zn(2+) contacts are provided by Cys-298, Cys-303, His-305, and Cys-311.

The protein belongs to the TRAFAC class YlqF/YawG GTPase family. RsgA subfamily. Monomer. Associates with 30S ribosomal subunit, binds 16S rRNA. Zn(2+) serves as cofactor.

The protein resides in the cytoplasm. In terms of biological role, one of several proteins that assist in the late maturation steps of the functional core of the 30S ribosomal subunit. Helps release RbfA from mature subunits. May play a role in the assembly of ribosomal proteins into the subunit. Circularly permuted GTPase that catalyzes slow GTP hydrolysis, GTPase activity is stimulated by the 30S ribosomal subunit. The polypeptide is Small ribosomal subunit biogenesis GTPase RsgA (Klebsiella pneumoniae (strain 342)).